A 95-amino-acid polypeptide reads, in one-letter code: LSM complex subunit LSM2 (95 aa).

One can recognise a Sm domain in the interval 2 to 76 (LFFSFFKTLV…VRYVYLNKNM (75 aa)).

Belongs to the snRNP Sm proteins family. As to quaternary structure, component of the heptameric LSM1-LSM7 complex that forms a seven-membered ring structure with a donut shape. The LSm subunits are arranged in the order LSM1, LSM2, LSM3, LSM6, LSM5, LSM7 and LSM4. Except for LSM1, where a C-terminal helix crosses the ring structure to form additional interactions with LSM3 and LSM6, each subunit interacts only with its two neighboring subunits. The LSM1-LSM7 complex interacts with PAT1; within the complex PAT1 has direct interactions with LSM2 and LSM3. The LSM1-LSM7 complex interacts with XRN1. Component of the heptameric LSM2-LSM8 complex that forms a seven-membered ring structure with a donut shape; an RNA strand can pass through the hole in the center of the ring structure. The LSm subunits are arranged in the order LSM8, LSM2, LSM3, LSM6, LSM5, LSM7 and LSM4. Interacts with U6 snRNA SNR6 and chaperone PRP24; to promote formation of the U4/U6-U5 tri-snRNP (small nuclear ribonucleoprotein) complex, the LSM2-LSM8 complex preferentially binds U6 snRNA that has been modified to contain a non-cyclic 3' phosphate. Component of the spliceosome U4/U6-U5 tri-snRNP complex composed of the U4, U6 and U5 snRNAs and at least PRP3, PRP4, PRP6, PRP8, PRP18, PRP31, PRP38, SNU13, SNU23, SNU66, SNU114, SPP381, SMB1, SMD1, SMD2, SMD3, SMX2, SMX3, LSM2, LSM3, LSM4, LSM5, LSM6, LSM7, LSM8, BRR2 and DIB1. May be found in a complex comprising LSM2-LSM7 without LSM1 or LSM8; the complex associates with pre-P RNA and snoRNA SNR5.

It is found in the nucleus. The protein localises to the nucleolus. The protein resides in the cytoplasm. Component of LSm protein complexes, which are involved in RNA processing and may function in a chaperone-like manner. Component of the cytoplasmic LSM1-LSM7 complex which is involved in mRNA degradation by activating the decapping step. Together with PAT1, the LSM1-LSM7 complex binds to osmotic stress-activated mRNAs to attenuate the osmotic stress response, probably by limiting ribosome access to the mRNA and consequently translation. Component of the nuclear LSM2-LSM8 complex, which is involved in spliceosome assembly. The LSM2-LSM8 complex plays a role in the biogenesis of the spliceosomal U4/U6-U5 tri-snRNP complex by accelerating PRP24-mediated annealing of U4/U6 di-snRNA. The LSM2-LSM8 complex binds U6 snRNA terminating with a non-cyclic 3' phosphate group. LSM2-LSM8 is probably also involved in degradation of nuclear pre-mRNA by targeting them for decapping. LSM2-LSM8 could be involved in processing of pre-tRNAs, pre-rRNAs and U3 snoRNA, although involvement may be indirect. In a complex that probably contains LSM2-LSM7, but not LSM1 or LSM8, associates with the precursor of the RNA component of RNase P (pre-P RNA) and may be involved in maturing pre-P RNA; the complex also associates with snoRNA SNR5. In Saccharomyces cerevisiae (strain ATCC 204508 / S288c) (Baker's yeast), this protein is LSM complex subunit LSM2 (LSM2).